Consider the following 614-residue polypeptide: Vitamin B12 transporter BtuB (614 aa).

The first 20 residues, 1 to 20 (MIKKATLLTAFSVTAFSAWA), serve as a signal peptide directing secretion. A TonB box motif is present at residues 26-33 (DTLVVTAN). The TBDR plug domain occupies 38–152 (PRSAVLAPVT…IGGVVNIITT (115 aa)). Residues Ser85, Asn92, and 110-111 (VS) each bind cyanocob(III)alamin. Residues 155 to 614 (NPGTELTAGW…EYTLSGSYTF (460 aa)) enclose the TBDR beta-barrel domain. 3 beta stranded membrane passes run 158-165 (TELTAGWG), 169-178 (YQNYDISTQQ), and 184-195 (TRATLIGDYEYT). Ca(2+) contacts are provided by Asp199, Gln211, Asp213, and Asp215. 2 consecutive transmembrane segments (beta stranded) span residues 217-227 (FLSKTLYGALE) and 232-248 (DRWS…NRTD). Tyr249 and Asp250 together coordinate Ca(2+). Residue Ala251 participates in cyanocob(III)alamin binding. Residue Asp261 participates in Ca(2+) binding. 14 beta stranded membrane passes run 263-277 (RKLY…LRFN), 279-296 (ERIQ…KDYN), 309-325 (TLDE…NSVV), 328-337 (HGNVGAGVDW), 353-369 (YDQR…QQLG), 371-381 (FTLEAAARSDD), 385-400 (FGRH…WEFI), 403-417 (YRFI…KAPN), 434-443 (KSKQWEGAFE), 449-458 (VSWRISGYRN), 473-490 (YYNE…TANF), 494-509 (PLTH…ARNA), 517-529 (RRSK…QLDW), and 535-550 (DWGV…YDSD). Thr309 contacts cyanocob(III)alamin. Cyanocob(III)alamin is bound at residue Arg517. Tyr551 contacts cyanocob(III)alamin. A run of 3 beta stranded transmembrane segments spans residues 558–572 (TVKM…LTVA), 585–596 (IANLFDKDYETV), and 602–614 (AGRE…SYTF). A TonB C-terminal box motif is present at residues 597-614 (YGYQTAGREYTLSGSYTF).

Belongs to the TonB-dependent receptor family. BtuB (TC 1.B.14.3.1) subfamily.

The protein localises to the cell outer membrane. In terms of biological role, involved in the active translocation of vitamin B12 (cyanocobalamin) across the outer membrane to the periplasmic space. It derives its energy for transport by interacting with the trans-periplasmic membrane protein TonB. The protein is Vitamin B12 transporter BtuB of Salmonella choleraesuis (strain SC-B67).